A 302-amino-acid polypeptide reads, in one-letter code: Beta-casein (302 aa).

The N-terminal stretch at 1–15 is a signal peptide; sequence MKLLILTCLVALGFA. Phosphoserine is present on residues serine 23 and serine 25. 16 consecutive repeat copies span residues 144–151, 152–159, 160–167, 168–175, 176–182, 183–190, 191–198, 199–204, 205–214, 215–222, 223–230, 231–238, 241–247, 248–255, 256–262, and 263–269. Positions 144-269 are 16 X approximate tandem repeats; sequence KREMLPIYER…LLPEEILPVN (126 aa).

The protein belongs to the beta-casein family. In terms of tissue distribution, mammary gland specific. Secreted in milk.

Its subcellular location is the secreted. Functionally, important role in determination of the surface properties of the casein micelles. The sequence is that of Beta-casein (CSN2) from Notamacropus eugenii (Tammar wallaby).